The following is a 270-amino-acid chain: MHYYRYSNAEVSCWYKYLLFSYNIVFWLAGVVFLGVGLWAWSEKGVLSDLTKVTRLHGIDPVVLVLMVGVVMFTLGFAGCVGALRENICLLKFFCGAIVLIFFLELAVAVLAFLFQDWVRDRFREFFESNIKSYRDDIDLQNLIDSLQKANQCCGAYGPEDWDLNVYFNCSGASYSREKCGVPFSCCVPDPAQKVVNTQCGYDVRIQLKSKWDEFIFTKGCIQALEGWLPRNIYIVAGVFIAISLLQIFGIFLARTLISDIEAVKAGHHF.

Residues 1–17 (MHYYRYSNAEVSCWYKY) are Cytoplasmic-facing. A helical transmembrane segment spans residues 18–38 (LLFSYNIVFWLAGVVFLGVGL). Residues 39–61 (WAWSEKGVLSDLTKVTRLHGIDP) lie on the Extracellular side of the membrane. The chain crosses the membrane as a helical span at residues 62–82 (VVLVLMVGVVMFTLGFAGCVG). Residues 83–92 (ALRENICLLK) are Cytoplasmic-facing. Residues 93–113 (FFCGAIVLIFFLELAVAVLAF) form a helical membrane-spanning segment. Residues 114 to 232 (LFQDWVRDRF…QALEGWLPRN (119 aa)) are Extracellular-facing. Residues 114-232 (LFQDWVRDRF…QALEGWLPRN (119 aa)) form a necessary and sufficient for interaction with ADAM10 region. 4 cysteine pairs are disulfide-bonded: Cys-153/Cys-221, Cys-154/Cys-186, Cys-170/Cys-180, and Cys-187/Cys-200. Asn-169 is a glycosylation site (N-linked (GlcNAc...) asparagine). A helical transmembrane segment spans residues 233 to 253 (IYIVAGVFIAISLLQIFGIFL). Residues 254–270 (ARTLISDIEAVKAGHHF) lie on the Cytoplasmic side of the membrane.

This sequence belongs to the tetraspanin (TM4SF) family. As to quaternary structure, interacts with ADAM10; the interaction promotes ADAM10 maturation and cell surface expression.

It is found in the cell membrane. Its function is as follows. Part of TspanC8 subgroup, composed of 6 members that interact with the transmembrane metalloprotease ADAM10. This interaction is required for ADAM10 exit from the endoplasmic reticulum and for enzymatic maturation and trafficking to the cell surface as well as substrate specificity. Different TspanC8/ADAM10 complexes have distinct substrates. Negatively regulates ADAM10-mediated cleavage of GP6. Promotes ADAM10-mediated cleavage of CDH5. The chain is Tetraspanin-14 (Tspan14) from Mus musculus (Mouse).